The primary structure comprises 634 residues: Serine/threonine kinase NLK (634 aa).

Residues S240 to L531 form the Protein kinase domain. ATP is bound by residues I246 to V254 and K269. D366 serves as the catalytic Proton acceptor.

The protein belongs to the protein kinase superfamily. CMGC Ser/Thr protein kinase family. MAP kinase subfamily. Component of the beta-catenin-lit-1 complex (also called the lit-1/wrm-1 complex or the wrm-1/lit-1 kinase complex) at least composed of lit-1 and wrm-1. Interacts with wrm-1 (via N-terminus); the interaction is direct and activates lit-1 kinase activity which leads to the phosphorylation of pop-1. This promotes pop-1 interaction with par-5 and translocation of pop-1 from the nucleus to the cytoplasm. Interacts with pop-1 (when phosphorylated on 'Ser-118' and 'Ser-127'); the interaction is dependent on the beta-catenin-lit-1 complex. Mg(2+) serves as cofactor. As to expression, expressed in the pharynx and seam and vulval cells.

It is found in the cytoplasm. The protein localises to the cell cortex. Its subcellular location is the nucleus. The catalysed reaction is L-seryl-[protein] + ATP = O-phospho-L-seryl-[protein] + ADP + H(+). It carries out the reaction L-threonyl-[protein] + ATP = O-phospho-L-threonyl-[protein] + ADP + H(+). Its function is as follows. Has a role in the Wnt signaling pathway controlling the asymmetry of cell divisions during embryogenesis. Operates in the AB and EMS cell lineages influencing cell specification. Required for body wall muscle development, endoderm development, pop-1 asymmetry and T-cell division asymmetry. Component of the beta-catenin-lit-1 complex which promotes the phosphorylation, down-regulation and subcellular relocation of pop-1. Regulates plp-1 nuclear localization in embryos. Plays a role in male tail tip morphogenesis. In Caenorhabditis elegans, this protein is Serine/threonine kinase NLK.